The primary structure comprises 223 residues: Cytidylate kinase (223 aa).

Position 10 to 18 (G10 to T18) interacts with ATP.

This sequence belongs to the cytidylate kinase family. Type 1 subfamily.

The protein resides in the cytoplasm. It carries out the reaction CMP + ATP = CDP + ADP. The enzyme catalyses dCMP + ATP = dCDP + ADP. The protein is Cytidylate kinase of Streptococcus pneumoniae serotype 4 (strain ATCC BAA-334 / TIGR4).